Here is a 717-residue protein sequence, read N- to C-terminus: SUN domain-containing protein 2 (717 aa).

Positions 1–66 (MSRRSQRLTR…PQLGPSSDAH (66 aa)) are disordered. The LMNA-binding stretch occupies residues 1–139 (MSRRSQRLTR…SSSGYSSEDD (139 aa)). Topologically, residues 1–212 (MSRRSQRLTR…LTRRFSSLKT (212 aa)) are nuclear. Position 12 is a phosphoserine (S12). Over residues 19–32 (SSSSGGSSVAGSQS) the composition is skewed to low complexity. 2 positions are modified to phosphoserine: S38 and S54. T107 is modified (phosphothreonine). Phosphoserine is present on residues S110, S113, S116, and S136. A helical membrane pass occupies residues 213-233 (FLWFLLPLLLLTCLTYGAWYF). Topologically, residues 234-717 (YPYGLQTFHP…RFRVHGEPAH (484 aa)) are perinuclear space. Coiled coils occupy residues 273-296 (EQRV…EFSS), 348-440 (RRET…EEVG), and 475-506 (LLQR…SARE). The sufficient for interaction with SYNE1 and SYNE2 stretch occupies residues 507–717 (AAASLSLTLQ…RFRVHGEPAH (211 aa)). An SUN domain is found at 555–716 (GASVISTRCS…YRFRVHGEPA (162 aa)). A disulfide bond links C601 and C705. A glycan (N-linked (GlcNAc...) asparagine) is linked at N636.

Core component of the LINC complex which is composed of inner nuclear membrane SUN domain-containing proteins coupled to outer nuclear membrane KASH domain-containing nesprins. SUN and KASH domain-containing proteins seem to bind each other promiscuously; however, differentially expression of LINC complex constituents is giving rise to specific assemblies. At least SUN1/2-containing core LINC complexes are proposed to be hexameric composed of three protomers of each KASH and SUN domain-containing protein. Interacts with SYNE2; the SUN2:SYNE2/KASH2 LINC complex is a heterohexamer; the homotrimeric cloverleave-like conformation of the SUN domain is a prerequisite for LINC complex formation in which three separate SYNE2/KASH2 peptides bind at the interface of adjacent SUN domains. Component of a probable SUN2:KASH5 LINC complex. Interacts with SYNE1 and SYNE3; probably forming respective LINC complexes. Interacts with A-type lamin. Interaction with lamins B1 and C is hardly detectable. Interacts with EMD and RAB5A. Interacts with TMEM43. Interacts with TMEM201. The disulfide bond with SYNE2 is required for stability of the SUN2:SYNE2/KASH2 LINC complex under tensile forces though not required for the interaction. The disulfide bond is proposed to be conserved in LINC complexes involved in force transmission. Widely expressed. Highly expressed in heart, lung and muscle. Weakly expressed in fetal heart. Slightly overexpressed in some heart tissues form patients with congenital heart defects.

It localises to the nucleus inner membrane. Its subcellular location is the nucleus envelope. It is found in the endosome membrane. Its function is as follows. As a component of the LINC (LInker of Nucleoskeleton and Cytoskeleton) complex, involved in the connection between the nuclear lamina and the cytoskeleton. The nucleocytoplasmic interactions established by the LINC complex play an important role in the transmission of mechanical forces across the nuclear envelope and in nuclear movement and positioning. Specifically, SYNE2 and SUN2 assemble in arrays of transmembrane actin-associated nuclear (TAN) lines which are bound to F-actin cables and couple the nucleus to retrograde actin flow during actin-dependent nuclear movement. Required for interkinetic nuclear migration (INM) and essential for nucleokinesis and centrosome-nucleus coupling during radial neuronal migration in the cerebral cortex and during glial migration. Required for nuclear migration in retinal photoreceptor progenitors implicating association with cytoplasmic dynein-dynactin and kinesin motor complexes, and probably B-type lamins; SUN1 and SUN2 seem to act redundantly. The SUN1/2:KASH5 LINC complex couples telomeres to microtubules during meiosis; SUN1 and SUN2 seem to act at least partial redundantly. Anchors chromosome movement in the prophase of meiosis and is involved in selective gene expression of coding and non-coding RNAs needed for gametogenesis. Required for telomere attachment to nuclear envelope and gametogenesis. May also function on endocytic vesicles as a receptor for RAB5-GDP and participate in the activation of RAB5. The protein is SUN domain-containing protein 2 of Homo sapiens (Human).